The primary structure comprises 241 residues: 1-(5-phosphoribosyl)-5-[(5-phosphoribosylamino)methylideneamino] imidazole-4-carboxamide isomerase (241 aa).

Residue D10 is the Proton acceptor of the active site. The active-site Proton donor is D131.

Belongs to the HisA/HisF family.

The protein localises to the cytoplasm. The enzyme catalyses 1-(5-phospho-beta-D-ribosyl)-5-[(5-phospho-beta-D-ribosylamino)methylideneamino]imidazole-4-carboxamide = 5-[(5-phospho-1-deoxy-D-ribulos-1-ylimino)methylamino]-1-(5-phospho-beta-D-ribosyl)imidazole-4-carboxamide. It participates in amino-acid biosynthesis; L-histidine biosynthesis; L-histidine from 5-phospho-alpha-D-ribose 1-diphosphate: step 4/9. This chain is 1-(5-phosphoribosyl)-5-[(5-phosphoribosylamino)methylideneamino] imidazole-4-carboxamide isomerase, found in Bifidobacterium adolescentis (strain ATCC 15703 / DSM 20083 / NCTC 11814 / E194a).